The sequence spans 137 residues: Putative transcriptional regulatory protein MJ0173 (137 aa).

It belongs to the Tfx family.

In terms of biological role, putative transcriptional regulator. In Methanocaldococcus jannaschii (strain ATCC 43067 / DSM 2661 / JAL-1 / JCM 10045 / NBRC 100440) (Methanococcus jannaschii), this protein is Putative transcriptional regulatory protein MJ0173.